Here is a 383-residue protein sequence, read N- to C-terminus: Xylose/arabinose import ATP-binding protein XacJ (383 aa).

Residues 4–235 (IQLTDLTKRF…PNNLFVAEFI (232 aa)) form the ABC transporter domain. An ATP-binding site is contributed by 36-43 (GPSGCGKS).

The protein belongs to the ABC transporter superfamily. Carbohydrate uptake transporter-1 (CUT1) (TC 3.A.1.1) family. As to quaternary structure, the complex is composed of two ATP-binding proteins (XacJ and XacK), two transmembrane proteins (XacH and XacI) and a solute-binding protein (XacG).

It is found in the cell membrane. It catalyses the reaction D-xylose(out) + ATP + H2O = D-xylose(in) + ADP + phosphate + H(+). It carries out the reaction L-arabinose(out) + ATP + H2O = L-arabinose(in) + ADP + phosphate + H(+). In terms of biological role, part of the ABC transporter complex XacGHIJK involved in the uptake of xylose and arabinose. Responsible for energy coupling to the transport system. This Haloferax volcanii (strain ATCC 29605 / DSM 3757 / JCM 8879 / NBRC 14742 / NCIMB 2012 / VKM B-1768 / DS2) (Halobacterium volcanii) protein is Xylose/arabinose import ATP-binding protein XacJ.